We begin with the raw amino-acid sequence, 416 residues long: Enolase (416 aa).

Glutamine 162 serves as a coordination point for (2R)-2-phosphoglycerate. Catalysis depends on glutamate 204, which acts as the Proton donor. Aspartate 241, glutamate 282, and aspartate 309 together coordinate Mg(2+). Positions 334, 363, 364, and 385 each coordinate (2R)-2-phosphoglycerate. The Proton acceptor role is filled by lysine 334.

It belongs to the enolase family. The cofactor is Mg(2+).

It is found in the cytoplasm. The protein localises to the secreted. It localises to the cell surface. The enzyme catalyses (2R)-2-phosphoglycerate = phosphoenolpyruvate + H2O. It participates in carbohydrate degradation; glycolysis; pyruvate from D-glyceraldehyde 3-phosphate: step 4/5. In terms of biological role, catalyzes the reversible conversion of 2-phosphoglycerate (2-PG) into phosphoenolpyruvate (PEP). It is essential for the degradation of carbohydrates via glycolysis. This is Enolase from Campylobacter concisus (strain 13826).